The primary structure comprises 401 residues: S-adenosylmethionine synthase (401 aa).

Residue 135–140 participates in ATP binding; it reads GHGSGD.

This sequence belongs to the AdoMet synthase 2 family. Mg(2+) is required as a cofactor.

The catalysed reaction is L-methionine + ATP + H2O = S-adenosyl-L-methionine + phosphate + diphosphate. It participates in amino-acid biosynthesis; S-adenosyl-L-methionine biosynthesis; S-adenosyl-L-methionine from L-methionine: step 1/1. Functionally, catalyzes the formation of S-adenosylmethionine from methionine and ATP. The protein is S-adenosylmethionine synthase (mat) of Methanothermobacter thermautotrophicus (strain ATCC 29096 / DSM 1053 / JCM 10044 / NBRC 100330 / Delta H) (Methanobacterium thermoautotrophicum).